We begin with the raw amino-acid sequence, 191 residues long: dCTP deaminase, dUMP-forming (191 aa).

Residues 101–106, D119, 127–129, Q148, Y162, and Q174 each bind dCTP; these read KSSLGR and TLE. Residue E129 is the Proton donor/acceptor of the active site. Positions 169-191 are disordered; the sequence is NRYQGQRGPTASRSHLNFHRTRI. Over residues 171–183 the composition is skewed to polar residues; that stretch reads YQGQRGPTASRSH.

This sequence belongs to the dCTP deaminase family. Homotrimer.

The enzyme catalyses dCTP + 2 H2O = dUMP + NH4(+) + diphosphate. The protein operates within pyrimidine metabolism; dUMP biosynthesis; dUMP from dCTP: step 1/1. Bifunctional enzyme that catalyzes both the deamination of dCTP to dUTP and the hydrolysis of dUTP to dUMP without releasing the toxic dUTP intermediate. The protein is dCTP deaminase, dUMP-forming of Pseudarthrobacter chlorophenolicus (strain ATCC 700700 / DSM 12829 / CIP 107037 / JCM 12360 / KCTC 9906 / NCIMB 13794 / A6) (Arthrobacter chlorophenolicus).